A 341-amino-acid chain; its full sequence is UDP-3-O-(3-hydroxymyristoyl)glucosamine N-acyltransferase (341 aa).

The Proton acceptor role is filled by His239.

This sequence belongs to the transferase hexapeptide repeat family. LpxD subfamily. In terms of assembly, homotrimer.

It catalyses the reaction a UDP-3-O-[(3R)-3-hydroxyacyl]-alpha-D-glucosamine + a (3R)-hydroxyacyl-[ACP] = a UDP-2-N,3-O-bis[(3R)-3-hydroxyacyl]-alpha-D-glucosamine + holo-[ACP] + H(+). The catalysed reaction is UDP-3-O-[(3R)-3-hydroxytetradecanoyl]-alpha-D-glucosamine + (3R)-hydroxytetradecanoyl-[ACP] = UDP-2-N,3-O-bis[(3R)-3-hydroxytetradecanoyl]-alpha-D-glucosamine + holo-[ACP] + H(+). It functions in the pathway glycolipid biosynthesis; lipid IV(A) biosynthesis; lipid IV(A) from (3R)-3-hydroxytetradecanoyl-[acyl-carrier-protein] and UDP-N-acetyl-alpha-D-glucosamine: step 3/6. Its function is as follows. Catalyzes the N-acylation of UDP-3-O-(hydroxytetradecanoyl)glucosamine using 3-hydroxytetradecanoyl-ACP as the acyl donor. Is involved in the biosynthesis of lipid A, a phosphorylated glycolipid that anchors the lipopolysaccharide to the outer membrane of the cell. In Shigella dysenteriae serotype 1 (strain Sd197), this protein is UDP-3-O-(3-hydroxymyristoyl)glucosamine N-acyltransferase.